Consider the following 502-residue polypeptide: Protein O-glucosyltransferase 2 (502 aa).

The N-terminal stretch at 1–19 is a signal peptide; sequence MFGTLLLYCFFLATVPALA. Residues 24–130 form a Filamin repeat; sequence ERQLSPEKSE…VAKSPYILKG (107 aa). Asn-302 and Asn-414 each carry an N-linked (GlcNAc...) asparagine glycan. A Prevents secretion from ER motif is present at residues 499 to 502; the sequence is KDEL.

Belongs to the KDELC family. In terms of processing, N-glycosylated.

The protein localises to the endoplasmic reticulum lumen. It carries out the reaction L-seryl-[EGF-like domain protein] + UDP-alpha-D-glucose = 3-O-(beta-D-glucosyl)-L-seryl-[EGF-like domain protein] + UDP + H(+). The catalysed reaction is L-seryl-[EGF-like domain protein] + UDP-alpha-D-xylose = 3-O-(beta-D-xylosyl)-L-seryl-[EGF-like domain protein] + UDP + H(+). Its pathway is protein modification; protein glycosylation. Protein glucosyltransferase that catalyzes the transfer of glucose from UDP-glucose to a serine residue within the consensus sequence peptide C-X-N-T-X-G-S-F-X-C. Can also catalyze the transfer of xylose from UDP-xylose but less efficiently. Specifically targets extracellular EGF repeats of proteins such as NOTCH1, NOTCH3, FBN1, FBN2 and LTBP1. May regulate the transport of NOTCH1 and NOTCH3 to the plasma membrane and thereby the Notch signaling pathway. The polypeptide is Protein O-glucosyltransferase 2 (Homo sapiens (Human)).